A 238-amino-acid polypeptide reads, in one-letter code: Response regulator receiver protein Anae109_2439 (238 aa).

Response regulatory domains follow at residues 3-117 (RYLI…AAAR) and 121-228 (LVAV…ERLH). Asp-52 and Asp-169 each carry 4-aspartylphosphate.

In terms of processing, is diphosphorylated by GchK.

In terms of biological role, member of the two-component regulatory system GcHK/Anae109_2439. Is involved in a signal transduction system responding to oxygen availability. This chain is Response regulator receiver protein Anae109_2439, found in Anaeromyxobacter sp. (strain Fw109-5).